The chain runs to 256 residues: Ribosomal RNA small subunit methyltransferase A (256 aa).

The S-adenosyl-L-methionine site is built by N12, L14, G39, E60, D85, and N103.

The protein belongs to the class I-like SAM-binding methyltransferase superfamily. rRNA adenine N(6)-methyltransferase family. RsmA subfamily.

The protein resides in the cytoplasm. It catalyses the reaction adenosine(1518)/adenosine(1519) in 16S rRNA + 4 S-adenosyl-L-methionine = N(6)-dimethyladenosine(1518)/N(6)-dimethyladenosine(1519) in 16S rRNA + 4 S-adenosyl-L-homocysteine + 4 H(+). Functionally, specifically dimethylates two adjacent adenosines (A1518 and A1519) in the loop of a conserved hairpin near the 3'-end of 16S rRNA in the 30S particle. May play a critical role in biogenesis of 30S subunits. This chain is Ribosomal RNA small subunit methyltransferase A, found in Legionella pneumophila subsp. pneumophila (strain Philadelphia 1 / ATCC 33152 / DSM 7513).